The chain runs to 116 residues: G antigen 2D (116 aa).

Residues 1 to 116 are disordered; the sequence is MSWRGRSTYR…PEEGEKQSQC (116 aa). Acidic residues-rich tracts occupy residues 31 to 44 and 86 to 95; these read FSDE…EEGE and ECEDGPDGQE. Residues 102–116 are compositionally biased toward basic and acidic residues; the sequence is EEVKTPEEGEKQSQC.

It belongs to the GAGE family. In terms of tissue distribution, not expressed in normal tissues, except in testis, but expressed by a large proportion of tumors of various histological origins.

The polypeptide is G antigen 2D (GAGE2D) (Homo sapiens (Human)).